Consider the following 235-residue polypeptide: Small ribosomal subunit protein eS4 (235 aa).

An S4 RNA-binding domain is found at 37–100 (LPLGIIIRDI…NETYRMFQDE (64 aa)).

Belongs to the eukaryotic ribosomal protein eS4 family.

The chain is Small ribosomal subunit protein eS4 from Methanosarcina barkeri (strain Fusaro / DSM 804).